The chain runs to 211 residues: Imidazole glycerol phosphate synthase subunit HisH (211 aa).

The Glutamine amidotransferase type-1 domain maps to 3–211 (VVAVIDYEMG…VSQVREKIAA (209 aa)). The active-site Nucleophile is Cys-81. Residues His-186 and Glu-188 contribute to the active site.

In terms of assembly, heterodimer of HisH and HisF.

The protein resides in the cytoplasm. The enzyme catalyses 5-[(5-phospho-1-deoxy-D-ribulos-1-ylimino)methylamino]-1-(5-phospho-beta-D-ribosyl)imidazole-4-carboxamide + L-glutamine = D-erythro-1-(imidazol-4-yl)glycerol 3-phosphate + 5-amino-1-(5-phospho-beta-D-ribosyl)imidazole-4-carboxamide + L-glutamate + H(+). It catalyses the reaction L-glutamine + H2O = L-glutamate + NH4(+). The protein operates within amino-acid biosynthesis; L-histidine biosynthesis; L-histidine from 5-phospho-alpha-D-ribose 1-diphosphate: step 5/9. Its function is as follows. IGPS catalyzes the conversion of PRFAR and glutamine to IGP, AICAR and glutamate. The HisH subunit catalyzes the hydrolysis of glutamine to glutamate and ammonia as part of the synthesis of IGP and AICAR. The resulting ammonia molecule is channeled to the active site of HisF. This chain is Imidazole glycerol phosphate synthase subunit HisH, found in Trichormus variabilis (strain ATCC 29413 / PCC 7937) (Anabaena variabilis).